The following is a 780-amino-acid chain: Kazrin (780 aa).

Positions 79–261 (AQVLLREEVV…LATLTKDVPK (183 aa)) form a coiled coil. A disordered region spans residues 295–430 (QQTLYHSHPP…TRHSLSLSEG (136 aa)). Phosphoserine is present on residues Ser357, Ser372, and Ser392. Residues 416–427 (SQCSPTRHSLSL) show a composition bias toward polar residues. 3 SAM domains span residues 451-516 (WKAG…YRDA), 529-593 (DHHW…LYQV), and 617-684 (WTNQ…STVF). A disordered region spans residues 692–780 (IRESERFGTP…EYSSLEVTNV (89 aa)). Over residues 760-771 (LQGRPEQCRLEE) the composition is skewed to basic and acidic residues.

It belongs to the kazrin family.

The protein resides in the cell junction. It is found in the nucleus. The protein localises to the cytoplasm. Its subcellular location is the cytoskeleton. Its function is as follows. Component of the cornified envelope of keratinocytes. May be involved in the interplay between adherens junctions and desmosomes. The function in the nucleus is not known. The protein is Kazrin (Kazn) of Rattus norvegicus (Rat).